We begin with the raw amino-acid sequence, 278 residues long: Aquaporin NIP3-3 (278 aa).

2 consecutive transmembrane segments (helical) span residues 70-90 and 99-119; these read VSAE…TIIM and TLLG…LSLI. Residues 127–129 carry the NPA 1 motif; sequence NPA. Transmembrane regions (helical) follow at residues 141 to 163, 185 to 205, and 213 to 233; these read PSAH…SFAV, AFFV…ALAT, and LIAV…GPST. Residues 238–240 carry the NPA 2 motif; it reads NPA. Residues 255–275 form a helical membrane-spanning segment; the sequence is IWVYLVATPLGAIAGTGAYVA.

The protein belongs to the MIP/aquaporin (TC 1.A.8) family. NIP (TC 1.A.8.12) subfamily. As to expression, expressed in leaves and at lower levels in roots and anthers.

It is found in the membrane. In terms of biological role, aquaporins facilitate the transport of water and small neutral solutes across cell membranes. The sequence is that of Aquaporin NIP3-3 (NIP3-3) from Oryza sativa subsp. japonica (Rice).